A 227-amino-acid chain; its full sequence is Cytochrome c oxidase subunit 2 (227 aa).

Over 1–14 the chain is Mitochondrial intermembrane; the sequence is MAYPLQMGLQDATS. The chain crosses the membrane as a helical span at residues 15–45; the sequence is PIMEELLHFHDHTLMIVFLISSLVLYIISLM. Residues 46-59 are Mitochondrial matrix-facing; sequence LTTKLTHTSTMDAQ. The chain crosses the membrane as a helical span at residues 60 to 87; that stretch reads EVETVWTILPAIILILIALPSLRILYMM. The Mitochondrial intermembrane portion of the chain corresponds to 88-227; that stretch reads DEINNPSLTV…HFEKWSTSML (140 aa). 6 residues coordinate Cu cation: His161, Cys196, Glu198, Cys200, His204, and Met207. Glu198 serves as a coordination point for Mg(2+).

The protein belongs to the cytochrome c oxidase subunit 2 family. As to quaternary structure, component of the cytochrome c oxidase (complex IV, CIV), a multisubunit enzyme composed of 14 subunits. The complex is composed of a catalytic core of 3 subunits MT-CO1, MT-CO2 and MT-CO3, encoded in the mitochondrial DNA, and 11 supernumerary subunits COX4I, COX5A, COX5B, COX6A, COX6B, COX6C, COX7A, COX7B, COX7C, COX8 and NDUFA4, which are encoded in the nuclear genome. The complex exists as a monomer or a dimer and forms supercomplexes (SCs) in the inner mitochondrial membrane with NADH-ubiquinone oxidoreductase (complex I, CI) and ubiquinol-cytochrome c oxidoreductase (cytochrome b-c1 complex, complex III, CIII), resulting in different assemblies (supercomplex SCI(1)III(2)IV(1) and megacomplex MCI(2)III(2)IV(2)). Found in a complex with TMEM177, COA6, COX18, COX20, SCO1 and SCO2. Interacts with TMEM177 in a COX20-dependent manner. Interacts with COX20. Interacts with COX16. It depends on Cu cation as a cofactor.

The protein localises to the mitochondrion inner membrane. The enzyme catalyses 4 Fe(II)-[cytochrome c] + O2 + 8 H(+)(in) = 4 Fe(III)-[cytochrome c] + 2 H2O + 4 H(+)(out). Functionally, component of the cytochrome c oxidase, the last enzyme in the mitochondrial electron transport chain which drives oxidative phosphorylation. The respiratory chain contains 3 multisubunit complexes succinate dehydrogenase (complex II, CII), ubiquinol-cytochrome c oxidoreductase (cytochrome b-c1 complex, complex III, CIII) and cytochrome c oxidase (complex IV, CIV), that cooperate to transfer electrons derived from NADH and succinate to molecular oxygen, creating an electrochemical gradient over the inner membrane that drives transmembrane transport and the ATP synthase. Cytochrome c oxidase is the component of the respiratory chain that catalyzes the reduction of oxygen to water. Electrons originating from reduced cytochrome c in the intermembrane space (IMS) are transferred via the dinuclear copper A center (CU(A)) of subunit 2 and heme A of subunit 1 to the active site in subunit 1, a binuclear center (BNC) formed by heme A3 and copper B (CU(B)). The BNC reduces molecular oxygen to 2 water molecules using 4 electrons from cytochrome c in the IMS and 4 protons from the mitochondrial matrix. The protein is Cytochrome c oxidase subunit 2 (MT-CO2) of Phoca vitulina (Harbor seal).